Reading from the N-terminus, the 295-residue chain is MSASAQHSQAQQQQQQKSCNCDLLLWRNPVQTGKYFGGSLLALLILKKVNLITFFLKVAYTILFTTGSIEFVSKLFLGQGLITKYGPKECPNIAGFIKPHIDEALKQLPVFQAHIRKTVFAQVPKHTFKTAVALFLLHKFFSWFSIWTIVFVADIFTFTLPVIYHSYKHEIDATVAQGVEISKQKTQEFSQMACEKTKPYLDKVESKLGPISNLVKSKTAPVSSTAGPQTASTSKLAADVPLEPESKAYTSSAQVMPEVPQHEPSTTQEFNVDELSNELKKSTKNLQNELEKNNA.

Topologically, residues 1–50 (MSASAQHSQAQQQQQQKSCNCDLLLWRNPVQTGKYFGGSLLALLILKKVN) are cytoplasmic. Residues 20-220 (NCDLLLWRNP…ISNLVKSKTA (201 aa)) enclose the Reticulon domain. Residues 51 to 73 (LITFFLKVAYTILFTTGSIEFVS) traverse the membrane as a helical segment. Residues 74–142 (KLFLGQGLIT…ALFLLHKFFS (69 aa)) lie on the Lumenal side of the membrane. A helical membrane pass occupies residues 143–163 (WFSIWTIVFVADIFTFTLPVI). The Cytoplasmic portion of the chain corresponds to 164–295 (YHSYKHEIDA…LQNELEKNNA (132 aa)). Residues threonine 186 and threonine 219 each carry the phosphothreonine modification. Positions 219–235 (TAPVSSTAGPQTASTSK) are enriched in polar residues. The tract at residues 219-295 (TAPVSSTAGP…LQNELEKNNA (77 aa)) is disordered. Serine 232 is modified (phosphoserine). A coiled-coil region spans residues 265–295 (STTQEFNVDELSNELKKSTKNLQNELEKNNA).

In terms of assembly, interacts with POM33.

It localises to the endoplasmic reticulum membrane. This Saccharomyces cerevisiae (strain ATCC 204508 / S288c) (Baker's yeast) protein is Reticulon-like protein 1 (RTN1).